Consider the following 181-residue polypeptide: Coatomer subunit zeta-3 (181 aa).

It belongs to the adaptor complexes small subunit family. In terms of assembly, oligomeric complex that consists of at least the alpha, beta, beta', gamma, delta, epsilon and zeta subunits.

The protein resides in the cytoplasm. Its subcellular location is the golgi apparatus membrane. It is found in the cytoplasmic vesicle. The protein localises to the COPI-coated vesicle membrane. The coatomer is a cytosolic protein complex that binds to dilysine motifs and reversibly associates with Golgi non-clathrin-coated vesicles, which further mediate biosynthetic protein transport from the ER, via the Golgi up to the trans Golgi network. Coatomer complex is required for budding from Golgi membranes, and is essential for the retrograde Golgi-to-ER transport of dilysine-tagged proteins. The zeta subunit may be involved in regulating the coat assembly and, hence, the rate of biosynthetic protein transport due to its association-dissociation properties with the coatomer complex. The protein is Coatomer subunit zeta-3 of Arabidopsis thaliana (Mouse-ear cress).